A 94-amino-acid polypeptide reads, in one-letter code: C-C motif chemokine 17 (94 aa).

The signal sequence occupies residues 1 to 23; sequence MAPLKMLALVTLLLGASLQHIHA. Disulfide bonds link cysteine 33–cysteine 57 and cysteine 34–cysteine 73.

The protein belongs to the intercrine beta (chemokine CC) family. In terms of tissue distribution, constitutively expressed in thymus. Detected at lower levels in the lung, colon and small intestine. Expressed in stimulated peripheral blood mononuclear cells, but not in resting cells.

The protein resides in the secreted. Functionally, chemokine, which displays chemotactic activity for T lymphocytes, preferentially Th2 cells, but not monocytes or granulocytes. Therefore plays an important role in a wide range of inflammatory and immunological processes. Acts by binding to CCR4 at T-cell surface. Mediates GM-CSF/CSF2-driven pain and inflammation. In the brain, required to maintain the typical, highly branched morphology of hippocampal microglia under homeostatic conditions. May be important for the appropriate adaptation of microglial morphology and synaptic plasticity to acute lipopolysaccharide (LPS)-induced neuroinflammation. Plays a role in wound healing, mainly by inducing fibroblast migration into the wound. This chain is C-C motif chemokine 17 (CCL17), found in Homo sapiens (Human).